Reading from the N-terminus, the 65-residue chain is Large ribosomal subunit protein bL35 (65 aa).

Belongs to the bacterial ribosomal protein bL35 family.

This is Large ribosomal subunit protein bL35 from Rhodospirillum rubrum (strain ATCC 11170 / ATH 1.1.1 / DSM 467 / LMG 4362 / NCIMB 8255 / S1).